The primary structure comprises 208 residues: RNA chaperone ProQ (208 aa).

Residues 106-127 (SKAKVATRRKEQAKKAREEAKA) are compositionally biased toward basic and acidic residues. The segment at 106 to 154 (SKAKVATRRKEQAKKAREEAKAKKTARAATPPKRRPQPAAKKVEQPVET) is disordered.

Belongs to the ProQ family.

It localises to the cytoplasm. Functionally, RNA chaperone with significant RNA binding, RNA strand exchange and RNA duplexing activities. The sequence is that of RNA chaperone ProQ from Aliivibrio fischeri (strain ATCC 700601 / ES114) (Vibrio fischeri).